A 265-amino-acid chain; its full sequence is Tryptophan synthase alpha chain (265 aa).

Active-site proton acceptor residues include Glu49 and Glu60.

It belongs to the TrpA family. In terms of assembly, tetramer of two alpha and two beta chains.

It carries out the reaction (1S,2R)-1-C-(indol-3-yl)glycerol 3-phosphate + L-serine = D-glyceraldehyde 3-phosphate + L-tryptophan + H2O. Its pathway is amino-acid biosynthesis; L-tryptophan biosynthesis; L-tryptophan from chorismate: step 5/5. Its function is as follows. The alpha subunit is responsible for the aldol cleavage of indoleglycerol phosphate to indole and glyceraldehyde 3-phosphate. In Herminiimonas arsenicoxydans, this protein is Tryptophan synthase alpha chain.